Here is a 511-residue protein sequence, read N- to C-terminus: NADH-quinone oxidoreductase subunit N 1 (511 aa).

14 consecutive transmembrane segments (helical) span residues 15-35 (LALP…LDLV), 46-66 (ALAL…WQAV), 89-109 (FAIY…LMSI), 120-140 (GEYH…ASGM), 142-162 (LILL…LVGF), 177-197 (LLLG…FYGL), 221-241 (PIAL…IAAV), 264-284 (VAVK…MLWP), 289-309 (YTPI…FAAL), 317-337 (LLAY…VASD), 347-367 (GILV…AVIT), 393-413 (AVLL…AGFW), 426-446 (GHYT…YYYL), and 471-491 (AALW…EVFL).

Belongs to the complex I subunit 2 family. NDH-1 is composed of 14 different subunits. Subunits NuoA, H, J, K, L, M, N constitute the membrane sector of the complex.

The protein resides in the cell inner membrane. It carries out the reaction a quinone + NADH + 5 H(+)(in) = a quinol + NAD(+) + 4 H(+)(out). In terms of biological role, NDH-1 shuttles electrons from NADH, via FMN and iron-sulfur (Fe-S) centers, to quinones in the respiratory chain. The immediate electron acceptor for the enzyme in this species is believed to be ubiquinone. Couples the redox reaction to proton translocation (for every two electrons transferred, four hydrogen ions are translocated across the cytoplasmic membrane), and thus conserves the redox energy in a proton gradient. This Koribacter versatilis (strain Ellin345) protein is NADH-quinone oxidoreductase subunit N 1.